Reading from the N-terminus, the 871-residue chain is Metabotropic glutamate receptor 6 (871 aa).

A signal peptide spans 1–23; the sequence is MGRLRVLLLWLAWWLSQAGIAHG. The Extracellular portion of the chain corresponds to 24 to 579; sequence AGSVRLAGGL…VVRLTWSSPW (556 aa). Cys51 and Cys93 are disulfide-bonded. L-glutamate is bound by residues Ser148, 169-171, and Tyr219; that span reads AST. 7 cysteine pairs are disulfide-bonded: Cys238-Cys530, Cys361-Cys377, Cys417-Cys424, Cys512-Cys531, Cys516-Cys534, Cys537-Cys549, and Cys552-Cys565. An N-linked (GlcNAc...) asparagine glycan is attached at Asn290. Position 301 (Asp301) interacts with L-glutamate. Lys394 is a binding site for L-glutamate. Asn445 and Asn473 each carry an N-linked (GlcNAc...) asparagine glycan. N-linked (GlcNAc...) asparagine glycosylation occurs at Asn561. The chain crosses the membrane as a helical span at residues 580–602; that stretch reads AALPLLLAVLGIMATTTIIATFM. The Cytoplasmic segment spans residues 603–616; the sequence is RHNDTPIVRASGRE. Residues 617 to 637 traverse the membrane as a helical segment; sequence LSYVLLTGIFLIYAITFLMVA. Residues 638 to 648 are Extracellular-facing; sequence EPCAAVCASRR. A helical membrane pass occupies residues 649-667; the sequence is LLLGLGTTLSYSALLTKTN. Topologically, residues 668 to 691 are cytoplasmic; the sequence is RIYRIFEQGKRSVTPPPFISPTSQ. The chain crosses the membrane as a helical span at residues 692–712; the sequence is LVITFGLTSLQVVGVIAWLGA. Residues 713–742 lie on the Extracellular side of the membrane; that stretch reads QPPHSVIDYEEQRTVDPEQARGVLKCDMSD. Residues 743 to 764 form a helical membrane-spanning segment; that stretch reads LSLIGCLGYSLLLMVTCTVYAI. Residues 765–777 are Cytoplasmic-facing; sequence KARGVPETFNEAK. A helical transmembrane segment spans residues 778-800; that stretch reads PIGFTMYTTCIIWLAFVPIFFGT. At 801–813 the chain is on the extracellular side; sequence AQSAEKIYIQTTT. A helical membrane pass occupies residues 814 to 839; it reads LTVSLSLSASVSLGMLYVPKTYVILF. At 840–871 the chain is on the cytoplasmic side; the sequence is HPEQNVQKRKRSLKKTSTMAAPPKSENSEDAK. Residues 848 to 871 are disordered; that stretch reads RKRSLKKTSTMAAPPKSENSEDAK.

It belongs to the G-protein coupled receptor 3 family. As to quaternary structure, homodimer. Interacts with GPR179. Interacts with photoreceptor synaptic protein LRIT1 (via its N-terminal extracellular domain). Detected in the outer plexiform layer in retina (at protein level).

The protein localises to the cell membrane. It localises to the endoplasmic reticulum membrane. Its subcellular location is the golgi apparatus membrane. It is found in the cell projection. The protein resides in the dendrite. G-protein coupled receptor for glutamate. Ligand binding causes a conformation change that triggers signaling via guanine nucleotide-binding proteins (G proteins) and modulates the activity of down-stream effectors, such as adenylate cyclase. Signaling inhibits adenylate cyclase activity. Signaling stimulates TRPM1 channel activity and Ca(2+) uptake. Required for normal vision. This Mus musculus (Mouse) protein is Metabotropic glutamate receptor 6 (Grm6).